Consider the following 301-residue polypeptide: Probable alpha-L-glutamate ligase (301 aa).

The ATP-grasp domain occupies 104–287 (LQLLSRRGIG…VAGMIIEHLE (184 aa)). ATP is bound by residues Lys141, 178–179 (EY), Asp187, and 211–213 (RSN). Asp248, Glu260, and Asn262 together coordinate Mg(2+). Asp248, Glu260, and Asn262 together coordinate Mn(2+).

The protein belongs to the RimK family. The cofactor is Mg(2+). Mn(2+) is required as a cofactor.

The sequence is that of Probable alpha-L-glutamate ligase from Pseudomonas putida (strain GB-1).